Consider the following 156-residue polypeptide: C-type lectin lectoxin-Phi1 (156 aa).

An N-terminal signal peptide occupies residues 1–23; that stretch reads MGRFIFVSLGLLVLAFSLSGIGA. 3 disulfides stabilise this stretch: Cys27-Cys38, Cys55-Cys154, and Cys129-Cys146. Positions 34–155 constitute a C-type lectin domain; it reads HNVSCYKLIN…CNRRHRFLCK (122 aa). Residues Asn35 and Asn109 are each glycosylated (N-linked (GlcNAc...) asparagine). Positions 119-121 match the Mannose-binding motif; sequence EPN. Glu127, Asn142, and Asp143 together coordinate Ca(2+).

Belongs to the true venom lectin family. In terms of tissue distribution, expressed by the venom gland.

Its subcellular location is the secreted. Functionally, mannose-binding lectin which recognizes specific carbohydrate structures and agglutinates a variety of animal cells by binding to cell-surface glycoproteins and glycolipids. May be a calcium-dependent lectin. This is C-type lectin lectoxin-Phi1 from Philodryas olfersii (Green snake).